The chain runs to 689 residues: Beta-adrenergic receptor kinase 1 (689 aa).

The interval 1-190 is N-terminal; the sequence is MADLEAVLAD…ELNIHLTMND (190 aa). Positions 54–175 constitute an RGS domain; it reads TFEKIFSQKL…IESDKFTRFC (122 aa). Residues 191–453 form the Protein kinase domain; that stretch reads FSVHRIIGRG…AQEVKESPFF (263 aa). ATP-binding positions include 197–205 and Lys220; that span reads IGRGGFGEV. The active-site Proton acceptor is Asp317. Residues 454 to 521 form the AGC-kinase C-terminal domain; that stretch reads RSLDWQMVFL…TISERWQQEV (68 aa). Residues 558–652 form the PH domain; the sequence is DCIMHGYMSK…WKKELRDAYR (95 aa). Ser670 is modified (phosphoserine).

It belongs to the protein kinase superfamily. AGC Ser/Thr protein kinase family. GPRK subfamily. As to quaternary structure, interacts with the heterodimer formed by GNB1 and GNG2. Interacts with GIT1. Interacts with, and phosphorylates chemokine-stimulated CCR5. Interacts with ARRB1. Interacts with LPAR1 and LPAR2. Interacts with RALA in response to LPAR1 activation. ADRBK1 and RALA mutually inhibit each other's binding to LPAR1. Interacts with ADRB2.

Its subcellular location is the cytoplasm. It localises to the cell membrane. It is found in the postsynapse. The protein localises to the presynapse. The catalysed reaction is [beta-adrenergic receptor] + ATP = [beta-adrenergic receptor]-phosphate + ADP + H(+). Its activity is regulated as follows. In contrast to other AGC family kinases, the catalytic activity is solely regulated by the binding of substrates and ligands, not by phosphorylation of the kinase domain. In terms of biological role, specifically phosphorylates the agonist-occupied form of the beta-adrenergic and closely related receptors, probably inducing a desensitization of them. Key regulator of LPAR1 signaling. Competes with RALA for binding to LPAR1 thus affecting the signaling properties of the receptor. Desensitizes LPAR1 and LPAR2 in a phosphorylation-independent manner. Positively regulates ciliary smoothened (SMO)-dependent Hedgehog (Hh) signaling pathway by facilitating the trafficking of SMO into the cilium and the stimulation of SMO activity. Inhibits relaxation of airway smooth muscle in response to blue light. This is Beta-adrenergic receptor kinase 1 from Mesocricetus auratus (Golden hamster).